Reading from the N-terminus, the 213-residue chain is Proteasome subunit beta 1 (213 aa).

A propeptide spans 1–18 (removed in mature form; by autocatalysis); sequence MVFIAVFNGVFAMSSLPG. Thr19 serves as the catalytic Nucleophile.

It belongs to the peptidase T1B family. The 20S proteasome core is composed of 14 alpha and 14 beta subunits that assemble into four stacked heptameric rings, resulting in a barrel-shaped structure. The two inner rings, each composed of seven catalytic beta subunits, are sandwiched by two outer rings, each composed of seven alpha subunits. The catalytic chamber with the active sites is on the inside of the barrel. Has a gated structure, the ends of the cylinder being occluded by the N-termini of the alpha-subunits. Is capped at one or both ends by the proteasome regulatory ATPase, PAN.

It localises to the cytoplasm. The catalysed reaction is Cleavage of peptide bonds with very broad specificity.. The formation of the proteasomal ATPase PAN-20S proteasome complex, via the docking of the C-termini of PAN into the intersubunit pockets in the alpha-rings, triggers opening of the gate for substrate entry. Interconversion between the open-gate and close-gate conformations leads to a dynamic regulation of the 20S proteasome proteolysis activity. Functionally, component of the proteasome core, a large protease complex with broad specificity involved in protein degradation. This Staphylothermus marinus (strain ATCC 43588 / DSM 3639 / JCM 9404 / F1) protein is Proteasome subunit beta 1.